A 449-amino-acid chain; its full sequence is Methionine aminopeptidase 2-2 (449 aa).

The interval Met1–Pro91 is disordered. The segment covering Asn15–Ala28 has biased composition (polar residues). Positions Asp34 to Gln50 are enriched in acidic residues. Over residues Lys61–Ala75 the composition is skewed to basic residues. His199 contributes to the substrate binding site. Residues Asp219, Asp230, and His299 each contribute to the a divalent metal cation site. A substrate-binding site is contributed by His307. Glu335 and Glu430 together coordinate a divalent metal cation.

This sequence belongs to the peptidase M24A family. Methionine aminopeptidase eukaryotic type 2 subfamily. Requires Co(2+) as cofactor. Zn(2+) serves as cofactor. Mn(2+) is required as a cofactor. The cofactor is Fe(2+).

Its subcellular location is the cytoplasm. It catalyses the reaction Release of N-terminal amino acids, preferentially methionine, from peptides and arylamides.. Its function is as follows. Cotranslationally removes the N-terminal methionine from nascent proteins. The N-terminal methionine is often cleaved when the second residue in the primary sequence is small and uncharged (Met-Ala-, Cys, Gly, Pro, Ser, Thr, or Val). In Arthroderma gypseum (strain ATCC MYA-4604 / CBS 118893) (Microsporum gypseum), this protein is Methionine aminopeptidase 2-2.